Consider the following 327-residue polypeptide: DNA-directed RNA polymerase subunit alpha (327 aa).

Residues 1–233 (MVREKVKVST…NLFIPFLHVE (233 aa)) form an alpha N-terminal domain (alpha-NTD) region. The alpha C-terminal domain (alpha-CTD) stretch occupies residues 264–327 (TKELAFQYIF…KKILDILEKK (64 aa)).

It belongs to the RNA polymerase alpha chain family. In terms of assembly, in plastids the minimal PEP RNA polymerase catalytic core is composed of four subunits: alpha, beta, beta', and beta''. When a (nuclear-encoded) sigma factor is associated with the core the holoenzyme is formed, which can initiate transcription.

Its subcellular location is the plastid. It localises to the chloroplast. It carries out the reaction RNA(n) + a ribonucleoside 5'-triphosphate = RNA(n+1) + diphosphate. In terms of biological role, DNA-dependent RNA polymerase catalyzes the transcription of DNA into RNA using the four ribonucleoside triphosphates as substrates. This is DNA-directed RNA polymerase subunit alpha from Capsella bursa-pastoris (Shepherd's purse).